A 40-amino-acid chain; its full sequence is Photosystem II reaction center protein J (40 aa).

Residues 8-28 (IPLWIIGTVTGLLVIGLIGIF) traverse the membrane as a helical segment.

This sequence belongs to the PsbJ family. PSII is composed of 1 copy each of membrane proteins PsbA, PsbB, PsbC, PsbD, PsbE, PsbF, PsbH, PsbI, PsbJ, PsbK, PsbL, PsbM, PsbT, PsbX, PsbY, PsbZ, Psb30/Ycf12, at least 3 peripheral proteins of the oxygen-evolving complex and a large number of cofactors. It forms dimeric complexes.

It localises to the plastid. Its subcellular location is the chloroplast thylakoid membrane. In terms of biological role, one of the components of the core complex of photosystem II (PSII). PSII is a light-driven water:plastoquinone oxidoreductase that uses light energy to abstract electrons from H(2)O, generating O(2) and a proton gradient subsequently used for ATP formation. It consists of a core antenna complex that captures photons, and an electron transfer chain that converts photonic excitation into a charge separation. In Ipomoea purpurea (Common morning glory), this protein is Photosystem II reaction center protein J.